The following is a 96-amino-acid chain: Conotoxin Mr15.1 (96 aa).

The signal sequence occupies residues 1-20 (MSTLKMMLLILLLLLPLATF). Positions 21 to 57 (DSDGQAIPGGGIPSAVNSRVGRLLGGDEKSGRSLEKR) are excised as a propeptide.

Belongs to the conotoxin N superfamily. In terms of processing, contains 4 disulfide bonds. As to expression, expressed by the venom duct.

The protein resides in the secreted. This chain is Conotoxin Mr15.1, found in Conus marmoreus (Marble cone).